A 255-amino-acid chain; its full sequence is MTADIRLFTCLTDNFGVLIHDPATDATAAIDAPEAGPIIEALDREGWTLTDILVTHHHADHIGGIAELKQKYKCRVVAPHDKKAPIANVDLRVGQGDIVKVGTLLGRVLETPGHTLDHISYVFDDEKVVFAADTLFSIGCGRVIEGTYPMMWDSLLKLRALPDDFRLYCGHEYTASNVKFALTVEPNNAALKARAEDVARLRAENKPTVPTLMGEEKKANVFLRADDPAVAAGVHMKGASGADVFGELRERKNKS.

Zn(2+)-binding residues include H56, H58, D60, H61, H114, D133, and H171.

Belongs to the metallo-beta-lactamase superfamily. Glyoxalase II family. In terms of assembly, monomer. Zn(2+) is required as a cofactor.

The catalysed reaction is an S-(2-hydroxyacyl)glutathione + H2O = a 2-hydroxy carboxylate + glutathione + H(+). It participates in secondary metabolite metabolism; methylglyoxal degradation; (R)-lactate from methylglyoxal: step 2/2. In terms of biological role, thiolesterase that catalyzes the hydrolysis of S-D-lactoyl-glutathione to form glutathione and D-lactic acid. This Nitrobacter hamburgensis (strain DSM 10229 / NCIMB 13809 / X14) protein is Hydroxyacylglutathione hydrolase.